The primary structure comprises 120 residues: Large ribosomal subunit protein bL21 (120 aa).

This sequence belongs to the bacterial ribosomal protein bL21 family. In terms of assembly, part of the 50S ribosomal subunit. Contacts protein L20.

Its function is as follows. This protein binds to 23S rRNA in the presence of protein L20. The sequence is that of Large ribosomal subunit protein bL21 from Rhizorhabdus wittichii (strain DSM 6014 / CCUG 31198 / JCM 15750 / NBRC 105917 / EY 4224 / RW1) (Sphingomonas wittichii).